The sequence spans 208 residues: Imidazoleglycerol-phosphate dehydratase (208 aa).

The protein belongs to the imidazoleglycerol-phosphate dehydratase family.

It localises to the cytoplasm. The catalysed reaction is D-erythro-1-(imidazol-4-yl)glycerol 3-phosphate = 3-(imidazol-4-yl)-2-oxopropyl phosphate + H2O. It functions in the pathway amino-acid biosynthesis; L-histidine biosynthesis; L-histidine from 5-phospho-alpha-D-ribose 1-diphosphate: step 6/9. This is Imidazoleglycerol-phosphate dehydratase from Mycobacterium sp. (strain JLS).